We begin with the raw amino-acid sequence, 383 residues long: Hydroxymethylglutaryl-CoA synthase (383 aa).

Residue Asp29 coordinates (3S)-3-hydroxy-3-methylglutaryl-CoA. Glu79 functions as the Proton donor/acceptor in the catalytic mechanism. (3S)-3-hydroxy-3-methylglutaryl-CoA contacts are provided by Cys111, Thr152, Ser201, His233, Lys242, Asn275, and Ser308. The active-site Acyl-thioester intermediate is Cys111. His233 serves as the catalytic Proton donor/acceptor.

The protein belongs to the thiolase-like superfamily. HMG-CoA synthase family. As to quaternary structure, homodimer.

It carries out the reaction acetoacetyl-CoA + acetyl-CoA + H2O = (3S)-3-hydroxy-3-methylglutaryl-CoA + CoA + H(+). It functions in the pathway metabolic intermediate biosynthesis; (R)-mevalonate biosynthesis; (R)-mevalonate from acetyl-CoA: step 2/3. Its activity is regulated as follows. Is sensitive to feedback substrate inhibition by acetoacetyl-CoA. Is inactivated by hymeglusin, which also blocks the growth of E.faecalis, indicating the critical role that the mevalonate pathway plays in isoprenoid biosynthesis. Catalyzes the condensation of acetyl-CoA with acetoacetyl-CoA to form 3-hydroxy-3-methylglutaryl-CoA (HMG-CoA). Functions in the mevalonate (MVA) pathway leading to isopentenyl diphosphate (IPP), a key precursor for the biosynthesis of isoprenoid compounds. In Enterococcus faecalis (Streptococcus faecalis), this protein is Hydroxymethylglutaryl-CoA synthase (mvaS).